The sequence spans 107 residues: Iron-binding protein IscA (107 aa).

Residues C35, C99, and C101 each contribute to the Fe cation site.

This sequence belongs to the HesB/IscA family. Homodimer; may form tetramers and higher multimers. Fe cation serves as cofactor.

Its function is as follows. Is able to transfer iron-sulfur clusters to apo-ferredoxin. Multiple cycles of [2Fe2S] cluster formation and transfer are observed, suggesting that IscA acts catalytically. Recruits intracellular free iron so as to provide iron for the assembly of transient iron-sulfur cluster in IscU in the presence of IscS, L-cysteine and the thioredoxin reductase system TrxA/TrxB. The chain is Iron-binding protein IscA from Pectobacterium carotovorum subsp. carotovorum (strain PC1).